The primary structure comprises 443 residues: Inactive polypeptide N-acetylgalactosaminyltransferase-like protein 5 (443 aa).

Over 1 to 4 the chain is Cytoplasmic; it reads MRNA. The chain crosses the membrane as a helical; Signal-anchor for type II membrane protein span at residues 5–27; sequence IIRCLFYGSLTFGIWTALLFIYL. Residues 28–443 lie on the Lumenal side of the membrane; it reads HHNHVSNWQK…PELEASVNRS (416 aa). The N-linked (GlcNAc...) asparagine glycan is linked to Asn-87. Intrachain disulfides connect Cys-124/Cys-355 and Cys-346/Cys-422. The tract at residues 133 to 243 is catalytic subdomain A; the sequence is LPTASIVICF…RVWLEPLLHA (111 aa). Asp-174 and Arg-204 together coordinate substrate. Asp-227 lines the Mn(2+) pocket. Ser-228 is a binding site for substrate. His-229 serves as a coordination point for Mn(2+). Residues 301–363 are catalytic subdomain B; sequence PIRSPAMSGG…PCSRVGHISK (63 aa). Substrate is bound at residue Trp-332. Residue His-360 participates in Mn(2+) binding.

The protein belongs to the glycosyltransferase 2 family. GalNAc-T subfamily. Mn(2+) serves as cofactor. Expressed in testis.

Its subcellular location is the late endosome membrane. Probable inactive glycosyltransferase required during spermatid development. May participate in protein loading into the acrosomes and accumulation of ubiquitin-proteasome systems around the head-tail coupling apparatus region. This is Inactive polypeptide N-acetylgalactosaminyltransferase-like protein 5 (GALNTL5) from Macaca fascicularis (Crab-eating macaque).